A 266-amino-acid polypeptide reads, in one-letter code: Large ribosomal subunit protein eL8 (266 aa).

Residues lysine 11, lysine 20, and lysine 21 each participate in a glycyl lysine isopeptide (Lys-Gly) (interchain with G-Cter in SUMO2) cross-link. An N6-acetyllysine modification is found at lysine 34. Lysine 48 is covalently cross-linked (Glycyl lysine isopeptide (Lys-Gly) (interchain with G-Cter in SUMO2)). An N6-acetyllysine; alternate modification is found at lysine 97. Lysine 97 is covalently cross-linked (Glycyl lysine isopeptide (Lys-Gly) (interchain with G-Cter in SUMO2); alternate). A Glycyl lysine isopeptide (Lys-Gly) (interchain with G-Cter in SUMO2) cross-link involves residue lysine 125. At lysine 217 the chain carries N6-acetyllysine. Lysine 245 participates in a covalent cross-link: Glycyl lysine isopeptide (Lys-Gly) (interchain with G-Cter in SUMO2).

The protein belongs to the eukaryotic ribosomal protein eL8 family. In terms of assembly, component of the large ribosomal subunit. Interacts with CRY1. Interacts with DICER1, AGO2, TARBP2, MOV10 and EIF6; they form a large RNA-induced silencing complex (RISC).

The protein resides in the cytoplasm. Functionally, component of the large ribosomal subunit. The ribosome is a large ribonucleoprotein complex responsible for the synthesis of proteins in the cell. This is Large ribosomal subunit protein eL8 (Rpl7a) from Mus musculus (Mouse).